The following is a 349-amino-acid chain: MRLHGEVSFDEDEEEVVMVPAAALSSSPLNGGAVPVTRLVVGYALTKKKVKSFLQPNLLLLARKKGINLVAIDDTRPLAEQGPFDVILHKITSKEWQQVLEDYHEEHPEVTVLDPPNAINHLNNRQSMLAEVSDLNLSSFYGEVCTPRQLVIMRDPSSIPTAVAMAGLTLPLVAKPLVVDGTSKSHELSLAYDEASLSMLDPPLVLQEFVNHGGILFKVYIIGETIQVVRRFSLPDVNTYDLLNNVGVYRFPRVSCAAASADHADLDPHISELPPRPLLEKLGKELRGRLGLRLFNIDMIRELGTKDRYYIIDINYFPGFGKMPGYEHIFTDFLLNLAQSKYKKCLSGG.

Residues K48 and K90 each coordinate 1D-myo-inositol 1,3,4-trisphosphate. 2 residues coordinate ATP: R125 and K175. Residues H186 and K218 each coordinate 1D-myo-inositol 1,3,4-trisphosphate. Residues 207–218 (QEFVNHGGILFK) and S233 contribute to the ATP site. 3 residues coordinate Mg(2+): D298, D313, and N315. N315 is a binding site for 1D-myo-inositol 1,3,4-trisphosphate.

This sequence belongs to the ITPK1 family. Monomer. It depends on Mg(2+) as a cofactor.

It carries out the reaction 1D-myo-inositol 3,4,5,6-tetrakisphosphate + ATP = 1D-myo-inositol 1,3,4,5,6-pentakisphosphate + ADP + H(+). It catalyses the reaction 1D-myo-inositol 1,3,4-trisphosphate + ATP = 1D-myo-inositol 1,3,4,5-tetrakisphosphate + ADP + H(+). The enzyme catalyses 1D-myo-inositol 1,3,4-trisphosphate + ATP = 1D-myo-inositol 1,3,4,6-tetrakisphosphate + ADP + H(+). Its function is as follows. Kinase that can phosphorylate various inositol polyphosphate such as Ins(3,4,5,6)P4 or Ins(1,3,4)P3 and participates in phytic acid biosynthesis in developing seeds. Phytic acid is the primary storage form of phosphorus in cereal grains and other plant seeds. This chain is Inositol-tetrakisphosphate 1-kinase 2 (ITPK2), found in Oryza sativa subsp. indica (Rice).